A 312-amino-acid polypeptide reads, in one-letter code: Cytochrome f (312 aa).

The signal sequence occupies residues 1-28 (MQISKFFKFVFISVSLCGSLLFPQMANA). The heme site is built by Tyr-29, Cys-49, Cys-52, and His-53. Residues 278–298 (VKGMIAFFFTVTVAQILLVLK) traverse the membrane as a helical segment.

This sequence belongs to the cytochrome f family. In terms of assembly, the 4 large subunits of the cytochrome b6-f complex are cytochrome b6, subunit IV (17 kDa polypeptide, petD), cytochrome f and the Rieske protein, while the 4 small subunits are PetG, PetL, PetM and PetN. The complex functions as a dimer. Requires heme as cofactor.

Its subcellular location is the plastid. The protein resides in the chloroplast thylakoid membrane. Functionally, component of the cytochrome b6-f complex, which mediates electron transfer between photosystem II (PSII) and photosystem I (PSI), cyclic electron flow around PSI, and state transitions. The chain is Cytochrome f from Emiliania huxleyi (Coccolithophore).